We begin with the raw amino-acid sequence, 389 residues long: Capsule polysaccharide export protein KpsS (389 aa).

This is Capsule polysaccharide export protein KpsS (kpsS) from Escherichia coli.